Here is a 438-residue protein sequence, read N- to C-terminus: MSETHLSTQRFADLPLHPEVKQALAENGFEFCTPIQALSLPVLLQSKDIAGQAQTGTGKTMAFLVATFNHLLSTPVPEGRLINQPRAIIMAPTRELAIQIAKDAILLAKHTHLKVGIVYGGESYDVQRKVLDQGVDILIGTTGRIIDYVRQGIIGLNSIQAVVLDEADRMFDLGFIKDIRFLFRRMPEANQRLNMLFSATLSMKVQELAYDHMNEPVKVEIAPEEKTSKNIKEEIFYPSQEEKMRLLLTLIEEDWPEKAIVFSNTKHSCETLWSWLEGDGHRVGLLTGDVPQKKRIRILEQFTSGQLDILVATDVAARGLHISDVSHVYNYDLPDDCEDYVHRIGRTGRAGNKGMSISFACEEYALNLPAIESYINHSIPVSNYDSEALLADIPTPAKIHRKHPSGTRNLRDRSGTSRPGAQRSGARPPRHDRTRRHS.

Positions 9 to 37 match the Q motif motif; it reads QRFADLPLHPEVKQALAENGFEFCTPIQA. One can recognise a Helicase ATP-binding domain in the interval 40–219; it reads LPVLLQSKDI…YDHMNEPVKV (180 aa). 53-60 is a binding site for ATP; that stretch reads AQTGTGKT. Positions 165–168 match the DEAD box motif; the sequence is DEAD. In terms of domain architecture, Helicase C-terminal spans 243-390; the sequence is KMRLLLTLIE…VSNYDSEALL (148 aa). The segment at 395 to 438 is disordered; it reads TPAKIHRKHPSGTRNLRDRSGTSRPGAQRSGARPPRHDRTRRHS. A compositionally biased stretch (basic residues) spans 428–438; sequence PPRHDRTRRHS.

It belongs to the DEAD box helicase family. RhlB subfamily. Component of the RNA degradosome, which is a multiprotein complex involved in RNA processing and mRNA degradation.

It localises to the cytoplasm. It carries out the reaction ATP + H2O = ADP + phosphate + H(+). DEAD-box RNA helicase involved in RNA degradation. Has RNA-dependent ATPase activity and unwinds double-stranded RNA. In Shewanella baltica (strain OS223), this protein is ATP-dependent RNA helicase RhlB.